The sequence spans 386 residues: Heavy metal-associated isoprenylated plant protein 5 (386 aa).

Positions 1 to 16 (MGEVQEGPKVEQEKKP) are enriched in basic and acidic residues. The disordered stretch occupies residues 1 to 40 (MGEVQEGPKVEQEKKPAATVVPVETTDGKPKSGGGDSAAA). In terms of domain architecture, HMA 1 spans 49–112 (VSAFVYKVDM…KLEEKTKRKV (64 aa)). The a metal cation site is built by C60 and C63. The disordered stretch occupies residues 129–153 (VGEKKADGGDKEAAPPAPAPAAPKE). Residues 130–141 (GEKKADGGDKEA) show a composition bias toward basic and acidic residues. Residues 153-220 (ESVVPLKIRL…KLKRTVEPLV (68 aa)) form the HMA 2 domain. A metal cation-binding residues include C164 and C167. Composition is skewed to basic and acidic residues over residues 223 to 245 (KKDDGAAENKKTEAAAPDAKKEA) and 252 to 297 (EAKK…KKDG). The tract at residues 223–301 (KKDDGAAENK…EKKKDGGGVP (79 aa)) is disordered. A Cysteine methyl ester modification is found at C383. C383 is lipidated: S-farnesyl cysteine. The propeptide at 384–386 (SVM) is removed in mature form.

The protein belongs to the HIPP family. Post-translationally, efficiently farnesylated in vitro.

Heavy-metal-binding protein. Involved in disease resistance. The chain is Heavy metal-associated isoprenylated plant protein 5 from Arabidopsis thaliana (Mouse-ear cress).